Here is a 354-residue protein sequence, read N- to C-terminus: Molybdenum import ATP-binding protein ModC (354 aa).

The region spanning 1 to 229 (MLELDFEQQL…SALRLWLQKE (229 aa)) is the ABC transporter domain. 31–38 (GLSGAGKT) provides a ligand contact to ATP. In terms of domain architecture, Mop spans 289 to 354 (GSSIRNILAV…IKSVSFHRQL (66 aa)).

Belongs to the ABC transporter superfamily. Molybdate importer (TC 3.A.1.8) family. The complex is composed of two ATP-binding proteins (ModC), two transmembrane proteins (ModB) and a solute-binding protein (ModA).

Its subcellular location is the cell inner membrane. The enzyme catalyses molybdate(out) + ATP + H2O = molybdate(in) + ADP + phosphate + H(+). Its function is as follows. Part of the ABC transporter complex ModABC involved in molybdenum import. Responsible for energy coupling to the transport system. In Photorhabdus laumondii subsp. laumondii (strain DSM 15139 / CIP 105565 / TT01) (Photorhabdus luminescens subsp. laumondii), this protein is Molybdenum import ATP-binding protein ModC.